We begin with the raw amino-acid sequence, 966 residues long: Protein STICHEL-like 4 (966 aa).

2 disordered regions span residues 64–118 (RSLR…DRSS) and 200–237 (RDNA…REQN). Residues 75-84 (LKEDHQDSRE) are compositionally biased toward basic and acidic residues. A compositionally biased stretch (polar residues) spans 98 to 108 (PIVSFGTSKVT). Residues 109–118 (PSDEKFDRSS) show a composition bias toward basic and acidic residues. The span at 208–217 (SEMSIASNSV) shows a compositional bias: polar residues. The span at 219–236 (RGEKYEGEEGGGGRDREQ) shows a compositional bias: basic and acidic residues. 384 to 391 (GPNGTGKT) provides a ligand contact to ATP. Zn(2+) is bound by residues cysteine 403, cysteine 412, cysteine 415, and cysteine 418. Positions 650-678 (SKEDMEKLKQALKTLSESEKQLRVSNDKL) form a coiled coil. Residues 706 to 717 (FNHTPLTDSDPS) show a composition bias toward polar residues. Positions 706-733 (FNHTPLTDSDPSNHVVAGTRRDDSKQGF) are disordered.

This sequence belongs to the DnaX/STICHEL family.

The sequence is that of Protein STICHEL-like 4 from Arabidopsis thaliana (Mouse-ear cress).